The following is a 62-amino-acid chain: MTIAFQLAVFALIATSSILLISVPVVFASPDGWLSNKNIVFSGTSLWIGLVFLVGILNSLIS.

The next 2 helical transmembrane spans lie at 8–28 (AVFA…VVFA) and 41–61 (FSGT…NSLI).

Belongs to the PsbZ family. As to quaternary structure, PSII is composed of 1 copy each of membrane proteins PsbA, PsbB, PsbC, PsbD, PsbE, PsbF, PsbH, PsbI, PsbJ, PsbK, PsbL, PsbM, PsbT, PsbY, PsbZ, Psb30/Ycf12, at least 3 peripheral proteins of the oxygen-evolving complex and a large number of cofactors. It forms dimeric complexes.

It localises to the plastid. Its subcellular location is the chloroplast thylakoid membrane. May control the interaction of photosystem II (PSII) cores with the light-harvesting antenna, regulates electron flow through the 2 photosystem reaction centers. PSII is a light-driven water plastoquinone oxidoreductase, using light energy to abstract electrons from H(2)O, generating a proton gradient subsequently used for ATP formation. The protein is Photosystem II reaction center protein Z of Gossypium barbadense (Sea Island cotton).